The primary structure comprises 354 residues: Photosystem II D2 protein (354 aa).

Threonine 2 carries the post-translational modification N-acetylthreonine. Threonine 2 carries the post-translational modification Phosphothreonine. Residues 42-62 (CAYFALGGWFTGTTFVTSWYT) traverse the membrane as a helical segment. Histidine 119 provides a ligand contact to chlorophyll a. The helical transmembrane segment at 126 to 142 (GFMLRQFELARSVQLRP) threads the bilayer. Residues glutamine 131 and asparagine 144 each contribute to the pheophytin a site. A helical transmembrane segment spans residues 154 to 167 (VFVSVFLIYPLGQS). Histidine 199 is a binding site for chlorophyll a. The helical transmembrane segment at 209–229 (AALLCAIHGATVENTLFEDGD) threads the bilayer. A plastoquinone contacts are provided by histidine 216 and phenylalanine 263. Histidine 216 lines the Fe cation pocket. Position 270 (histidine 270) interacts with Fe cation. Residues 280–296 (GLWMSALGVVGLALNLR) traverse the membrane as a helical segment.

It belongs to the reaction center PufL/M/PsbA/D family. PSII is composed of 1 copy each of membrane proteins PsbA, PsbB, PsbC, PsbD, PsbE, PsbF, PsbH, PsbI, PsbJ, PsbK, PsbL, PsbM, PsbT, PsbX, PsbY, PsbZ, Psb30/Ycf12, at least 3 peripheral proteins of the oxygen-evolving complex and a large number of cofactors. It forms dimeric complexes. Requires The D1/D2 heterodimer binds P680, chlorophylls that are the primary electron donor of PSII, and subsequent electron acceptors. It shares a non-heme iron and each subunit binds pheophytin, quinone, additional chlorophylls, carotenoids and lipids. There is also a Cl(-1) ion associated with D1 and D2, which is required for oxygen evolution. The PSII complex binds additional chlorophylls, carotenoids and specific lipids. as cofactor.

It is found in the plastid. The protein resides in the chloroplast thylakoid membrane. It carries out the reaction 2 a plastoquinone + 4 hnu + 2 H2O = 2 a plastoquinol + O2. Its function is as follows. Photosystem II (PSII) is a light-driven water:plastoquinone oxidoreductase that uses light energy to abstract electrons from H(2)O, generating O(2) and a proton gradient subsequently used for ATP formation. It consists of a core antenna complex that captures photons, and an electron transfer chain that converts photonic excitation into a charge separation. The D1/D2 (PsbA/PsbD) reaction center heterodimer binds P680, the primary electron donor of PSII as well as several subsequent electron acceptors. D2 is needed for assembly of a stable PSII complex. The chain is Photosystem II D2 protein from Piper cenocladum (Ant piper).